Reading from the N-terminus, the 595-residue chain is Protein kinase C iota type (595 aa).

Residues 1–12 (MPTQRDSSTMSH) are compositionally biased toward polar residues. Residues 1–21 (MPTQRDSSTMSHTVACGGGGD) are disordered. The residue at position 2 (Pro2) is an N-acetylproline. A required for interaction with RAB2 region spans residues 2-28 (PTQRDSSTMSHTVACGGGGDHSHQVRV). Residues 2–252 (PTQRDSSTMS…KASSSLGLQD (251 aa)) form a regulatory domain region. Thr3 bears the Phosphothreonine mark. 2 positions are modified to phosphoserine: Ser7 and Ser8. Thr9 carries the phosphothreonine modification. The PB1 domain occupies 25–108 (QVRVKAYYRG…SELLIHVFPC (84 aa)). The interaction with PARD6A stretch occupies residues 72-91 (DEEGDPCTVSSQLELEEAFR). The Pseudosubstrate motif lies at 125–134 (YRRGARRWRK). The Phorbol-ester/DAG-type zinc finger occupies 140-190 (GHTFQAKRFNRRAHCAICTDRIWGLGRQGYKCINCKLLVHKKCHKLVTIEC). Residues 253-521 (FDLLRVIGRG…FADIQGHPFF (269 aa)) enclose the Protein kinase domain. 259 to 267 (IGRGSYAKV) lines the ATP pocket. Phosphotyrosine; by SRC occurs at positions 264 and 279. Lys282 contributes to the ATP binding site. Tyr333 carries the post-translational modification Phosphotyrosine; by SRC. Asp377 serves as the catalytic Proton acceptor. 2 positions are modified to phosphothreonine: Thr411 and Thr563. The AGC-kinase C-terminal domain maps to 522-593 (RNVDWDMMEQ…INPLLMSAEE (72 aa)).

This sequence belongs to the protein kinase superfamily. AGC Ser/Thr protein kinase family. PKC subfamily. In terms of assembly, forms a complex with SQSTM1 and MP2K5. Interacts directly with SQSTM1. Interacts with IKBKB. Interacts with PARD6A, PARD6B and PARD6G. Part of a quaternary complex containing aPKC, PARD3, a PARD6 protein (PARD6A, PARD6B or PARD6G) and a GTPase protein (CDC42 or RAC1). Part of a complex with LLGL1 and PARD6B. Interacts with ADAP1/CENTA1. Interaction with SMG1, through the ZN-finger domain, activates the kinase activity. Interacts with CDK7. Forms a complex with RAB2A and GAPDH involved in recruitment onto the membrane of vesicular tubular clusters (VTCs). Interacts with ECT2 ('Thr-359' phosphorylated form). Interacts with VAMP2. Interacts with WDFY2 (via WD repeats 1-3). Post-translationally, phosphorylation at Thr-411 in the activation loop is not mandatory for activation. Upon neuronal growth factor (NGF) stimulation, phosphorylated by SRC at Tyr-264, Tyr-279 and Tyr-333. Phosphorylation on Tyr-264 facilitates binding to KPNB1/importin-beta regulating entry of PRKCI into the nucleus. Phosphorylation on Tyr-333 is important for NF-kappa-B stimulation. Phosphorylated at Thr-563 during the initial phase of long term potentiation.

The protein localises to the cytoplasm. It localises to the membrane. The protein resides in the endosome. Its subcellular location is the nucleus. The catalysed reaction is L-seryl-[protein] + ATP = O-phospho-L-seryl-[protein] + ADP + H(+). It carries out the reaction L-threonyl-[protein] + ATP = O-phospho-L-threonyl-[protein] + ADP + H(+). Atypical PKCs (PRKCI and PRKCZ) exhibit an elevated basal enzymatic activity (that may be due to the interaction with SMG1 or SQSTM1) and are not regulated by diacylglycerol, phosphatidylserine, phorbol esters or calcium ions. Two specific sites, Thr-411 (activation loop of the kinase domain) and Thr-563 (turn motif), need to be phosphorylated for its full activation. Might also be a target for novel lipid activators that are elevated during nutrient-stimulated insulin secretion. Calcium- and diacylglycerol-independent serine/ threonine-protein kinase that plays a general protective role against apoptotic stimuli, is involved in NF-kappa-B activation, cell survival, differentiation and polarity, and contributes to the regulation of microtubule dynamics in the early secretory pathway. Is necessary for BCR-ABL oncogene-mediated resistance to apoptotic drug in leukemia cells, protecting leukemia cells against drug-induced apoptosis. In cultured neurons, prevents amyloid beta protein-induced apoptosis by interrupting cell death process at a very early step. In glioblastoma cells, may function downstream of phosphatidylinositol 3-kinase (PI3K) and PDPK1 in the promotion of cell survival by phosphorylating and inhibiting the pro-apoptotic factor BAD. Can form a protein complex in non-small cell lung cancer (NSCLC) cells with PARD6A and ECT2 and regulate ECT2 oncogenic activity by phosphorylation, which in turn promotes transformed growth and invasion. In response to nerve growth factor (NGF), acts downstream of SRC to phosphorylate and activate IRAK1, allowing the subsequent activation of NF-kappa-B and neuronal cell survival. Functions in the organization of the apical domain in epithelial cells by phosphorylating EZR. This step is crucial for activation and normal distribution of EZR at the early stages of intestinal epithelial cell differentiation. Forms a protein complex with LLGL1 and PARD6B independently of PARD3 to regulate epithelial cell polarity. Plays a role in microtubule dynamics in the early secretory pathway through interaction with RAB2A and GAPDH and recruitment to vesicular tubular clusters (VTCs). In human coronary artery endothelial cells (HCAEC), is activated by saturated fatty acids and mediates lipid-induced apoptosis. Downstream of PI3K is required for insulin-stimulated glucose transport. Activates RAB4A and promotes its association with KIF3A which is required for the insulin-induced SLC2A4/GLUT4 translocation in adipocytes. Is essential in early embryogenesis and development of differentiating photoreceptors by playing a role in the establishment of epithelial and neuronal polarity. Involved in early synaptic long term potentiation phase in CA1 hippocampal cells and short term memory formation. The polypeptide is Protein kinase C iota type (Prkci) (Mus musculus (Mouse)).